The primary structure comprises 445 residues: UPF0210 protein LACR_1020 (445 aa).

This sequence belongs to the UPF0210 family. In terms of assembly, homodimer.

This is UPF0210 protein LACR_1020 from Lactococcus lactis subsp. cremoris (strain SK11).